The chain runs to 317 residues: Putative pyridoxal kinase BUD17 (317 aa).

Residues serine 16 and tyrosine 128 each coordinate substrate. ATP is bound by residues 190–191 (TS) and 220–232 (EIPK…SGSG). Residue aspartate 233 participates in substrate binding.

The protein belongs to the pyridoxine kinase family. A divalent metal cation is required as a cofactor.

It localises to the cytoplasm. It is found in the nucleus. The catalysed reaction is pyridoxal + ATP = pyridoxal 5'-phosphate + ADP + H(+). Required for synthesis of pyridoxal-5-phosphate from vitamin B6. Important for bud site selection. The protein is Putative pyridoxal kinase BUD17 (BUD17) of Saccharomyces cerevisiae (strain ATCC 204508 / S288c) (Baker's yeast).